The following is a 478-amino-acid chain: Sulfate adenylyltransferase subunit 1 (478 aa).

Residues 28–244 enclose the tr-type G domain; the sequence is KTMLRFLTCG…LESVDVVNAS (217 aa). The segment at 37–44 is G1; the sequence is GSVDDGKS. A GTP-binding site is contributed by 37–44; sequence GSVDDGKS. Positions 95–99 are G2; the sequence is GITID. Positions 116–119 are G3; that stretch reads DTPG. GTP contacts are provided by residues 116-120 and 171-174; these read DTPGH and NKMD. The G4 stretch occupies residues 171–174; sequence NKMD. The segment at 209-211 is G5; sequence SAL.

Belongs to the TRAFAC class translation factor GTPase superfamily. Classic translation factor GTPase family. CysN/NodQ subfamily. Heterodimer composed of CysD, the smaller subunit, and CysN.

The enzyme catalyses sulfate + ATP + H(+) = adenosine 5'-phosphosulfate + diphosphate. The protein operates within sulfur metabolism; hydrogen sulfide biosynthesis; sulfite from sulfate: step 1/3. Functionally, with CysD forms the ATP sulfurylase (ATPS) that catalyzes the adenylation of sulfate producing adenosine 5'-phosphosulfate (APS) and diphosphate, the first enzymatic step in sulfur assimilation pathway. APS synthesis involves the formation of a high-energy phosphoric-sulfuric acid anhydride bond driven by GTP hydrolysis by CysN coupled to ATP hydrolysis by CysD. The chain is Sulfate adenylyltransferase subunit 1 from Yersinia enterocolitica serotype O:8 / biotype 1B (strain NCTC 13174 / 8081).